We begin with the raw amino-acid sequence, 152 residues long: UPF0266 membrane protein YobD (152 aa).

3 helical membrane passes run 6–26, 45–65, and 67–87; these read LVLI…QFIM, IDSV…VTNH, and ALIT…IFWI.

Belongs to the UPF0266 family.

It is found in the cell inner membrane. This is UPF0266 membrane protein YobD from Escherichia coli O45:K1 (strain S88 / ExPEC).